Reading from the N-terminus, the 232-residue chain is Phosphatidylserine decarboxylase proenzyme (232 aa).

Serine 201 (schiff-base intermediate with substrate; via pyruvic acid) is an active-site residue. Serine 201 bears the Pyruvic acid (Ser); by autocatalysis mark.

It belongs to the phosphatidylserine decarboxylase family. PSD-A subfamily. As to quaternary structure, heterodimer of a large membrane-associated beta subunit and a small pyruvoyl-containing alpha subunit. Pyruvate serves as cofactor. Post-translationally, is synthesized initially as an inactive proenzyme. Formation of the active enzyme involves a self-maturation process in which the active site pyruvoyl group is generated from an internal serine residue via an autocatalytic post-translational modification. Two non-identical subunits are generated from the proenzyme in this reaction, and the pyruvate is formed at the N-terminus of the alpha chain, which is derived from the carboxyl end of the proenzyme. The post-translation cleavage follows an unusual pathway, termed non-hydrolytic serinolysis, in which the side chain hydroxyl group of the serine supplies its oxygen atom to form the C-terminus of the beta chain, while the remainder of the serine residue undergoes an oxidative deamination to produce ammonia and the pyruvoyl prosthetic group on the alpha chain.

The protein resides in the cell membrane. The catalysed reaction is a 1,2-diacyl-sn-glycero-3-phospho-L-serine + H(+) = a 1,2-diacyl-sn-glycero-3-phosphoethanolamine + CO2. It functions in the pathway phospholipid metabolism; phosphatidylethanolamine biosynthesis; phosphatidylethanolamine from CDP-diacylglycerol: step 2/2. In terms of biological role, catalyzes the formation of phosphatidylethanolamine (PtdEtn) from phosphatidylserine (PtdSer). This chain is Phosphatidylserine decarboxylase proenzyme, found in Mycolicibacterium gilvum (strain PYR-GCK) (Mycobacterium gilvum (strain PYR-GCK)).